Here is a 313-residue protein sequence, read N- to C-terminus: Fe-S cluster assembly protein dre2 (313 aa).

2 disordered regions span residues 1-25 (MSIT…SQKR) and 151-187 (GRKK…AQNN). The interval 20–145 (NGSQKRNLLL…FEKPVQEAAV (126 aa)) is N-terminal SAM-like domain. The segment at 146 to 203 (PLKLGGRKKKDKTNGVNGVQNGVATNGASTNGVGMFDPAQNNDDELIDEDALLSDDDL) is linker. The span at 159–177 (NGVNGVQNGVATNGASTNG) shows a compositional bias: polar residues. The [2Fe-2S] cluster site is built by Cys213, Cys225, Cys228, and Cys230. The segment at 213–230 (CVPETAKKRRRPCKDCTC) is fe-S binding site A. Cys276, Cys279, Cys287, and Cys290 together coordinate [4Fe-4S] cluster. 2 short sequence motifs (cx2C motif) span residues 276-279 (CNSC) and 287-290 (CSSC). Residues 276–290 (CNSCSLGDAFRCSSC) are fe-S binding site B.

The protein belongs to the anamorsin family. As to quaternary structure, monomer. Interacts with tah18. Interacts with mia40. [2Fe-2S] cluster is required as a cofactor. Requires [4Fe-4S] cluster as cofactor.

It localises to the cytoplasm. It is found in the mitochondrion intermembrane space. Functionally, component of the cytosolic iron-sulfur (Fe-S) protein assembly (CIA) machinery required for the maturation of extramitochondrial Fe-S proteins. Part of an electron transfer chain functioning in an early step of cytosolic Fe-S biogenesis, facilitating the de novo assembly of a [4Fe-4S] cluster on the scaffold complex cfd1-nbp35. Electrons are transferred to dre2 from NADPH via the FAD- and FMN-containing protein tah18. Tah18-dre2 are also required for the assembly of the diferric tyrosyl radical cofactor of ribonucleotide reductase (RNR), probably by providing electrons for reduction during radical cofactor maturation in the catalytic small subunit rnr2. The protein is Fe-S cluster assembly protein dre2 of Aspergillus oryzae (strain ATCC 42149 / RIB 40) (Yellow koji mold).